The chain runs to 234 residues: Preflagellin peptidase (234 aa).

Residue Met1 is a topological domain, cytoplasmic. Residues 2–18 (INFIVGAIGLLIASIYD) form a helical membrane-spanning segment. Residues 19-23 (LKSRE) are Extracellular-facing. The helical transmembrane segment at 24 to 46 (IEDYVWVSMVIFGLIYNGYLSFI) threads the bilayer. Topologically, residues 47-49 (SHD) are cytoplasmic. A helical transmembrane segment spans residues 50–72 (MLYVIQSIVGFIVCFFLGFFMFL). Over 73–78 (LGVGGG) the chain is Extracellular. A helical membrane pass occupies residues 79–89 (DGKLIMGLGAL). Topologically, residues 90-110 (IPKYNMPIHTPLGAILNYLYL) are cytoplasmic. A helical transmembrane segment spans residues 111–139 (PSFPIMVVINAMFFSITLPIIIFLRNVIR). Topologically, residues 140 to 205 (GVKPKTKKEV…EEIWVTPAIP (66 aa)) are extracellular. The helical transmembrane segment at 206-217 (FVVPIFLSYLLT) threads the bilayer. Residues 218–234 (SIIGDKIIGIFLSVFGL) are Cytoplasmic-facing.

It belongs to the peptidase A24 family. Archaeal preflagellin peptidase subfamily.

The protein resides in the cell membrane. The enzyme catalyses Cleaves the signal peptide of 3 to 12 amino acids from the N-terminal of preflagellin, usually at Arg-Gly-|- or Lys-Gly-|-, to release flagellin.. Functionally, cleaves the N-terminal leader peptide from preflagellins. This Methanocaldococcus jannaschii (strain ATCC 43067 / DSM 2661 / JAL-1 / JCM 10045 / NBRC 100440) (Methanococcus jannaschii) protein is Preflagellin peptidase (flaK).